The sequence spans 442 residues: 3-oxoacyl-[acyl-carrier-protein] synthase homolog (442 aa).

A Ketosynthase family 3 (KS3) domain is found at 2–438 (SRRVVITGLG…GVNTSLLFKK (437 aa)). Active-site for beta-ketoacyl synthase activity residues include cysteine 187, histidine 322, and histidine 362.

Belongs to the thiolase-like superfamily. Beta-ketoacyl-ACP synthases family.

The protein localises to the mitochondrion. It catalyses the reaction a fatty acyl-[ACP] + malonyl-[ACP] + H(+) = a 3-oxoacyl-[ACP] + holo-[ACP] + CO2. Functionally, possibly involved in the synthesis of a specialized molecule, probably related to a fatty acid, which is essential for mitochondrial respiration. Is essential for oxygen uptake and the presence of cytochromes A and B. This is 3-oxoacyl-[acyl-carrier-protein] synthase homolog (CEM1) from Saccharomyces cerevisiae (strain ATCC 204508 / S288c) (Baker's yeast).